A 259-amino-acid chain; its full sequence is Haloacid dehalogenase-like hydrolase domain-containing protein 2 (259 aa).

The Mg(2+) site is built by aspartate 13 and serine 15. Residues 13–15 (DLS) and 46–47 (TN) contribute to the substrate site. Positions 47 to 71 (NTTKESKQDLLERLRKLEFDISEDE) form a coiled coil. Position 50 is an N6-succinyllysine (lysine 50). Substrate is bound at residue lysine 179. Residue aspartate 204 coordinates Mg(2+).

Belongs to the HAD-like hydrolase superfamily. It depends on Mg(2+) as a cofactor.

This Pongo abelii (Sumatran orangutan) protein is Haloacid dehalogenase-like hydrolase domain-containing protein 2 (HDHD2).